A 734-amino-acid polypeptide reads, in one-letter code: Ribosomal RNA large subunit methyltransferase K/L (734 aa).

The THUMP domain maps to 49 to 167; that stretch reads HAYRICMWSR…KTEHTYCLDL (119 aa).

The protein belongs to the methyltransferase superfamily. RlmKL family.

It localises to the cytoplasm. The enzyme catalyses guanosine(2445) in 23S rRNA + S-adenosyl-L-methionine = N(2)-methylguanosine(2445) in 23S rRNA + S-adenosyl-L-homocysteine + H(+). It catalyses the reaction guanosine(2069) in 23S rRNA + S-adenosyl-L-methionine = N(2)-methylguanosine(2069) in 23S rRNA + S-adenosyl-L-homocysteine + H(+). In terms of biological role, specifically methylates the guanine in position 2445 (m2G2445) and the guanine in position 2069 (m7G2069) of 23S rRNA. This Acinetobacter baumannii (strain AYE) protein is Ribosomal RNA large subunit methyltransferase K/L.